The primary structure comprises 479 residues: MAHFNQNFLDSIERDLPSHLSMEDFIAYSNKPLRLSIRVNTLKISTENFIDLMSAKGWSFDPIPWCNQGFWVTISSDLQLGNTIEHLQGLFYIQEASSMLPPTALFDSHADNENDLSQFAQTRVLDMASAPGSKTTQIAALMNNQGLLVANEYSASRVKVLHANVARMGVSNCALTHFDARVFGEYLFETFDSVLLDAPCSGEGTIRKDPDALKNWDNNDNKGIVDTQKALIESAFLALKVGGCLVYSTCALSRQENQDVCHHLKTAFGEAVEFAALTELFPDADKACTEEGFLHVWPQIYDSEGFFVAKIRKVSAVERTLPEPKMQKNFPFTAAKTKQIEELTAYFEDSFAITLPTDAEIMVRDLEFWLFPKAVMPLIGKMRFQRIGIKLADALKKGYKVRHEAILALSSPTRFELSDEQAKEFLMGRDISLVEKVKPQGEVIVSYASNPLGVAKHLGNKLKNNLPRDLVKDKIALYQ.

S-adenosyl-L-methionine is bound by residues 128–134, glutamate 152, aspartate 179, and aspartate 197; that span reads ASAPGSK. Cysteine 250 serves as the catalytic Nucleophile.

The protein belongs to the class I-like SAM-binding methyltransferase superfamily. RsmB/NOP family.

The protein localises to the cytoplasm. It carries out the reaction cytidine(1407) in 16S rRNA + S-adenosyl-L-methionine = 5-methylcytidine(1407) in 16S rRNA + S-adenosyl-L-homocysteine + H(+). Functionally, specifically methylates the cytosine at position 1407 (m5C1407) of 16S rRNA. The sequence is that of Ribosomal RNA small subunit methyltransferase F from Shewanella halifaxensis (strain HAW-EB4).